The sequence spans 526 residues: ATP synthase subunit alpha (526 aa).

171 to 178 contacts ATP; it reads GDRQTGKT.

This sequence belongs to the ATPase alpha/beta chains family. In terms of assembly, F-type ATPases have 2 components, CF(1) - the catalytic core - and CF(0) - the membrane proton channel. CF(1) has five subunits: alpha(3), beta(3), gamma(1), delta(1), epsilon(1). CF(0) has four main subunits: a, b, b' and c.

It localises to the cell inner membrane. The enzyme catalyses ATP + H2O + 4 H(+)(in) = ADP + phosphate + 5 H(+)(out). Produces ATP from ADP in the presence of a proton gradient across the membrane. The alpha chain is a regulatory subunit. The polypeptide is ATP synthase subunit alpha (Chlorobium limicola (strain DSM 245 / NBRC 103803 / 6330)).